The primary structure comprises 513 residues: ATP synthase subunit alpha (513 aa).

Residue 169–176 participates in ATP binding; it reads GDRQTGKT.

The protein belongs to the ATPase alpha/beta chains family. F-type ATPases have 2 components, CF(1) - the catalytic core - and CF(0) - the membrane proton channel. CF(1) has five subunits: alpha(3), beta(3), gamma(1), delta(1), epsilon(1). CF(0) has three main subunits: a(1), b(2) and c(9-12). The alpha and beta chains form an alternating ring which encloses part of the gamma chain. CF(1) is attached to CF(0) by a central stalk formed by the gamma and epsilon chains, while a peripheral stalk is formed by the delta and b chains.

Its subcellular location is the cell inner membrane. The catalysed reaction is ATP + H2O + 4 H(+)(in) = ADP + phosphate + 5 H(+)(out). Its function is as follows. Produces ATP from ADP in the presence of a proton gradient across the membrane. The alpha chain is a regulatory subunit. In Yersinia pseudotuberculosis serotype O:1b (strain IP 31758), this protein is ATP synthase subunit alpha.